The chain runs to 318 residues: uncharacterized protein (318 aa).

The interval 19-63 (VPPDARHHEPRPGMTDHPDTGNGIGLTGRPPRAIPDPAPRSSHGP) is disordered. Positions 21-37 (PDARHHEPRPGMTDHPD) are enriched in basic and acidic residues. 72–79 (QKGGVGKT) is an ATP binding site.

This sequence belongs to the ParA family.

May play a role in septum formation. This is an uncharacterized protein from Mycobacterium tuberculosis (strain CDC 1551 / Oshkosh).